The following is a 513-amino-acid chain: GMP synthase [glutamine-hydrolyzing] (513 aa).

The region spanning 3 to 200 is the Glutamine amidotransferase type-1 domain; sequence SVLVLDFGSQ…LLNIAGITPD (198 aa). Cys80 (nucleophile) is an active-site residue. Active-site residues include His174 and Glu176. Positions 201-388 constitute a GMPS ATP-PPase domain; sequence WSSKSFIDHQ…LGIAEDILMR (188 aa). 228–234 is a binding site for ATP; the sequence is SGGVDST.

Homodimer.

It catalyses the reaction XMP + L-glutamine + ATP + H2O = GMP + L-glutamate + AMP + diphosphate + 2 H(+). Its pathway is purine metabolism; GMP biosynthesis; GMP from XMP (L-Gln route): step 1/1. Its function is as follows. Catalyzes the synthesis of GMP from XMP. In Chlorobium phaeovibrioides (strain DSM 265 / 1930) (Prosthecochloris vibrioformis (strain DSM 265)), this protein is GMP synthase [glutamine-hydrolyzing].